The primary structure comprises 314 residues: Ribosomal RNA small subunit methyltransferase H (314 aa).

S-adenosyl-L-methionine is bound by residues 34 to 36 (GGH), aspartate 53, phenylalanine 82, aspartate 103, and glutamine 110.

It belongs to the methyltransferase superfamily. RsmH family.

It localises to the cytoplasm. The catalysed reaction is cytidine(1402) in 16S rRNA + S-adenosyl-L-methionine = N(4)-methylcytidine(1402) in 16S rRNA + S-adenosyl-L-homocysteine + H(+). Functionally, specifically methylates the N4 position of cytidine in position 1402 (C1402) of 16S rRNA. This Limosilactobacillus fermentum (strain NBRC 3956 / LMG 18251) (Lactobacillus fermentum) protein is Ribosomal RNA small subunit methyltransferase H.